We begin with the raw amino-acid sequence, 659 residues long: Threonine--tRNA ligase (659 aa).

A TGS domain is found at 7 to 70 (DSELIKLTLP…QQDGAIEIVT (64 aa)). The catalytic stretch occupies residues 253–555 (DHRKLGSELE…LIENFAGNFP (303 aa)). Residues cysteine 351, histidine 402, and histidine 532 each contribute to the Zn(2+) site.

This sequence belongs to the class-II aminoacyl-tRNA synthetase family. As to quaternary structure, homodimer. The cofactor is Zn(2+).

It localises to the cytoplasm. It carries out the reaction tRNA(Thr) + L-threonine + ATP = L-threonyl-tRNA(Thr) + AMP + diphosphate + H(+). In terms of biological role, catalyzes the attachment of threonine to tRNA(Thr) in a two-step reaction: L-threonine is first activated by ATP to form Thr-AMP and then transferred to the acceptor end of tRNA(Thr). Also edits incorrectly charged L-seryl-tRNA(Thr). This Chloroherpeton thalassium (strain ATCC 35110 / GB-78) protein is Threonine--tRNA ligase.